A 363-amino-acid chain; its full sequence is Ribosomal RNA small subunit methyltransferase H (363 aa).

Residues 55 to 57, aspartate 75, aspartate 122, and glutamine 129 each bind S-adenosyl-L-methionine; that span reads GGH.

The protein belongs to the methyltransferase superfamily. RsmH family.

It localises to the cytoplasm. It catalyses the reaction cytidine(1402) in 16S rRNA + S-adenosyl-L-methionine = N(4)-methylcytidine(1402) in 16S rRNA + S-adenosyl-L-homocysteine + H(+). Its function is as follows. Specifically methylates the N4 position of cytidine in position 1402 (C1402) of 16S rRNA. This chain is Ribosomal RNA small subunit methyltransferase H, found in Bordetella petrii (strain ATCC BAA-461 / DSM 12804 / CCUG 43448).